A 137-amino-acid chain; its full sequence is Holo-[acyl-carrier-protein] synthase (137 aa).

Positions 7 and 58 each coordinate Mg(2+).

This sequence belongs to the P-Pant transferase superfamily. AcpS family. Mg(2+) is required as a cofactor.

The protein localises to the cytoplasm. The enzyme catalyses apo-[ACP] + CoA = holo-[ACP] + adenosine 3',5'-bisphosphate + H(+). Its function is as follows. Transfers the 4'-phosphopantetheine moiety from coenzyme A to a Ser of acyl-carrier-protein. The sequence is that of Holo-[acyl-carrier-protein] synthase from Chloroflexus aurantiacus (strain ATCC 29366 / DSM 635 / J-10-fl).